The sequence spans 1233 residues: Reverse gyrase 2 (1233 aa).

Residues 1 to 41 (MNTIPSSNYLSSCPNCGRVISAERLYKGSVCSECLEEDREF) form an RG N-terminal-type zinc finger. The Zn(2+) site is built by cysteine 13, cysteine 16, cysteine 31, and cysteine 34. ATP is bound by residues glutamine 89 and 106–113 (APPGLGKT). One can recognise a Helicase ATP-binding domain in the interval 93–296 (IIRVLRKESF…ALMGFRPGSS (204 aa)). A DEAD box motif is present at residues 212–215 (DDVD). A topoisomerase I region spans residues 606-1233 (QKVKTVLFIV…DIYYEIKSIR (628 aa)). Residues 610 to 774 (TVLFIVESPN…NIKRAEFHEV (165 aa)) form the Toprim domain. Residue glutamate 616 participates in Mg(2+) binding. The RG C-terminal-type; atypical zinc finger occupies 691-720 (IKKCINGHQFTDFEQGNQCPKCHTTQIILD). 4 residues coordinate Zn(2+): cysteine 694, histidine 698, cysteine 709, and cysteine 712. Residue aspartate 743 coordinates Mg(2+). Residues 790 to 1233 (NVNLVKSQIV…DIYYEIKSIR (444 aa)) form the Topo IA-type catalytic domain. Tyrosine 947 functions as the O-(5'-phospho-DNA)-tyrosine intermediate in the catalytic mechanism.

In the N-terminal section; belongs to the DEAD box helicase family. DDVD subfamily. This sequence in the C-terminal section; belongs to the type IA topoisomerase family. As to quaternary structure, monomer. It depends on Zn(2+) as a cofactor. Mg(2+) serves as cofactor.

Its subcellular location is the cytoplasm. It catalyses the reaction ATP + H2O = ADP + phosphate + H(+). In terms of biological role, modifies the topological state of DNA by introducing positive supercoils in an ATP-dependent process, increasing the linking number in steps of +1. Binds to single-stranded DNA, transiently cleaves and then rejoins the ends, introducing a positive supercoil in the process. The scissile phosphodiester is attacked by the catalytic tyrosine of the enzyme, resulting in the formation of a DNA-(5'-phosphotyrosyl)-enzyme intermediate. Probably involved in rewinding DNA strands in regions of the chromosome that have opened up to allow replication, transcription, DNA repair and/or for DNA protection. The chain is Reverse gyrase 2 from Sulfurisphaera tokodaii (strain DSM 16993 / JCM 10545 / NBRC 100140 / 7) (Sulfolobus tokodaii).